Reading from the N-terminus, the 418-residue chain is Probable basic-leucine zipper transcription factor E (418 aa).

The stretch at Ile-8–Thr-47 forms a coiled coil. 2 stretches are compositionally biased toward low complexity: residues Phe-51–Asn-71 and Ile-95–Thr-134. 4 disordered regions span residues Phe-51–Phe-75, Ile-95–Lys-149, Pro-165–Thr-196, and Lys-211–Arg-252. Positions Val-169–Ala-179 are enriched in basic residues. A compositionally biased stretch (low complexity) spans Lys-180 to Thr-196. Residues Asp-220–Asn-239 show a composition bias toward acidic residues. The bZIP domain maps to Gly-246–Leu-309. The basic motif stretch occupies residues Arg-248 to Lys-268. The tract at residues Leu-274 to Leu-281 is leucine-zipper. A coiled-coil region spans residues Ser-324–Asn-362. The interval Asn-336–Asp-418 is disordered.

It belongs to the bZIP family.

The protein localises to the nucleus. Its function is as follows. Probable transcriptional regulator. The sequence is that of Probable basic-leucine zipper transcription factor E (bzpE) from Dictyostelium discoideum (Social amoeba).